Reading from the N-terminus, the 66-residue chain is MIIPIRCFTCGSLIGDKWEPFITRVSNGEDPGKVLDDLGVKRYCCRRMLLSHVDIIKEVIHYTRPI.

The Zn(2+) site is built by Cys-7, Cys-10, Cys-44, and Cys-45.

It belongs to the archaeal Rpo10/eukaryotic RPB10 RNA polymerase subunit family. In terms of assembly, part of the RNA polymerase complex. Zn(2+) serves as cofactor.

Its subcellular location is the cytoplasm. It catalyses the reaction RNA(n) + a ribonucleoside 5'-triphosphate = RNA(n+1) + diphosphate. Functionally, DNA-dependent RNA polymerase (RNAP) catalyzes the transcription of DNA into RNA using the four ribonucleoside triphosphates as substrates. The sequence is that of DNA-directed RNA polymerase subunit Rpo10 from Sulfurisphaera tokodaii (strain DSM 16993 / JCM 10545 / NBRC 100140 / 7) (Sulfolobus tokodaii).